The sequence spans 516 residues: Extracellular endo-inulinase inuB (516 aa).

A signal peptide spans 1–25 (MLNPKVAYMVWMTCLGLTLPSQAQS). Substrate-binding positions include 40–43 (WMNE), Gln59, Trp67, and 99–100 (FT). Glu43 is a catalytic residue. Residue Asn109 is glycosylated (N-linked (GlcNAc...) asparagine). Residues 175–176 (RD) and Glu233 contribute to the substrate site. N-linked (GlcNAc...) asparagine glycosylation is found at Asn372, Asn419, and Asn424.

This sequence belongs to the glycosyl hydrolase 32 family.

The protein localises to the secreted. It catalyses the reaction Endohydrolysis of (2-&gt;1)-beta-D-fructosidic linkages in inulin.. Its function is as follows. Endo-inulinase involved in utilization of the plant storage polymer inulin, consisting of fructooligosaccharides with a degree of polymerization (DP) value from 2 to 60. The protein is Extracellular endo-inulinase inuB (inuB) of Aspergillus niger.